Reading from the N-terminus, the 452-residue chain is Phosphoglucosamine mutase (452 aa).

The Phosphoserine intermediate role is filled by S108. 4 residues coordinate Mg(2+): S108, D247, D249, and D251. S108 is modified (phosphoserine).

The protein belongs to the phosphohexose mutase family. Mg(2+) is required as a cofactor. Activated by phosphorylation.

The catalysed reaction is alpha-D-glucosamine 1-phosphate = D-glucosamine 6-phosphate. Functionally, catalyzes the conversion of glucosamine-6-phosphate to glucosamine-1-phosphate. This is Phosphoglucosamine mutase from Paraburkholderia phymatum (strain DSM 17167 / CIP 108236 / LMG 21445 / STM815) (Burkholderia phymatum).